The sequence spans 354 residues: Ferrochelatase (354 aa).

The Fe cation site is built by H214 and E295.

Belongs to the ferrochelatase family.

Its subcellular location is the cytoplasm. It catalyses the reaction heme b + 2 H(+) = protoporphyrin IX + Fe(2+). It functions in the pathway porphyrin-containing compound metabolism; protoheme biosynthesis; protoheme from protoporphyrin-IX: step 1/1. Functionally, catalyzes the ferrous insertion into protoporphyrin IX. The protein is Ferrochelatase of Burkholderia cenocepacia (strain HI2424).